We begin with the raw amino-acid sequence, 86 residues long: Dynein light chain 1, cytoplasmic (86 aa).

It belongs to the dynein light chain family. In terms of assembly, homodimer. Cytoplasmic dynein consists of two catalytic heavy chains (HCs) and a number of non-catalytic subunits which present intermediate chains (ICs), light intermediate chains (LICs) and light chains (LCs). Component of the nuclear pore complex (NPC). NPC constitutes the exclusive means of nucleocytoplasmic transport. NPCs allow the passive diffusion of ions and small molecules and the active, nuclear transport receptor-mediated bidirectional transport of macromolecules such as proteins, RNAs, ribonucleoparticles (RNPs), and ribosomal subunits across the nuclear envelope. Due to its 8-fold rotational symmetry, all subunits are present with 8 copies or multiples thereof.

The protein resides in the cytoplasm. The protein localises to the cytoskeleton. It is found in the nucleus. Its subcellular location is the nuclear pore complex. Acts as one of several non-catalytic accessory components of the cytoplasmic dynein complex that are thought to be involved in linking dynein to cargos and to adapter proteins that regulate dynein function. Cytoplasmic dynein 1 acts as a motor for the intracellular retrograde motility of vesicles and organelles along microtubules. May play a role in changing or maintaining the spatial distribution of cytoskeletal structures. Also a component of the nuclear pore complex. The sequence is that of Dynein light chain 1, cytoplasmic (DYN2) from Candida glabrata (strain ATCC 2001 / BCRC 20586 / JCM 3761 / NBRC 0622 / NRRL Y-65 / CBS 138) (Yeast).